The sequence spans 311 residues: DPRVRKQYIQEQGAPIVIKADGLAAGKGVTVAMTLEEAYKAVDSMLVQGDFGSAGCRVIVEEFLEGEEASFFALVDGENAIPLESAQDHKRVGDGDTGPNTGGMGAYSPAPVLTKELQSIVMDSIIIPTVKGMSAEGSKFVGVLYAGLMIEKKSGMPKLIEYNVRFGDPECQVLMVRLESDLVQVLLAACRGELNGVSLKWSPGSAMVVVMASKGYPGSYQKGTVIENLEEAEAVAPGIKIFHAGTAFDSEGRFIATGGRVLGVTAKGNDLEEACDRAYLAVENVNWPGGFLPSGYWLESSTSETSMLERE.

Residues aspartate 1–arginine 191 enclose the ATP-grasp domain.

The protein belongs to the GARS family.

The protein localises to the plastid. It is found in the chloroplast. The enzyme catalyses 5-phospho-beta-D-ribosylamine + glycine + ATP = N(1)-(5-phospho-beta-D-ribosyl)glycinamide + ADP + phosphate + H(+). Its pathway is purine metabolism; IMP biosynthesis via de novo pathway; N(1)-(5-phospho-D-ribosyl)glycinamide from 5-phospho-alpha-D-ribose 1-diphosphate: step 2/2. This Vigna unguiculata (Cowpea) protein is Phosphoribosylamine--glycine ligase (PUR2).